Here is a 323-residue protein sequence, read N- to C-terminus: Fructose-1,6-bisphosphatase class 1 (323 aa).

Mg(2+) contacts are provided by glutamate 88, aspartate 107, leucine 109, and aspartate 110. Substrate is bound by residues 110-113 (DGSS) and asparagine 200. Position 272 (glutamate 272) interacts with Mg(2+).

This sequence belongs to the FBPase class 1 family. As to quaternary structure, homotetramer. It depends on Mg(2+) as a cofactor.

Its subcellular location is the cytoplasm. It carries out the reaction beta-D-fructose 1,6-bisphosphate + H2O = beta-D-fructose 6-phosphate + phosphate. Its pathway is carbohydrate biosynthesis; gluconeogenesis. This is Fructose-1,6-bisphosphatase class 1 from Acinetobacter baumannii (strain ATCC 17978 / DSM 105126 / CIP 53.77 / LMG 1025 / NCDC KC755 / 5377).